The primary structure comprises 230 residues: Ion-translocating oxidoreductase complex subunit E (230 aa).

Transmembrane regions (helical) follow at residues 18–38, 39–59, 63–83, 86–106, 125–145, and 182–202; these read ALVQLLGLCPLLAVTSTATNA, LGLGLATTLVLTLTNLTVSAL, TPAEIRIPIYVMIIASVVSAV, LINAYAFGLYQSLGIFIPLIV, WLSALDGFSIGMGATGAMFVL, and PFLLAMLPPGAFIGLGLMLAV.

Belongs to the NqrDE/RnfAE family. The complex is composed of six subunits: RsxA, RsxB, RsxC, RsxD, RsxE and RsxG.

The protein localises to the cell inner membrane. Functionally, part of a membrane-bound complex that couples electron transfer with translocation of ions across the membrane. Required to maintain the reduced state of SoxR. In Salmonella agona (strain SL483), this protein is Ion-translocating oxidoreductase complex subunit E.